The sequence spans 208 residues: Superoxide dismutase [Mn] (208 aa).

Mn(2+) is bound by residues His-27, His-81, Asp-168, and His-172.

The protein belongs to the iron/manganese superoxide dismutase family. Homodimer. The cofactor is Mn(2+).

The enzyme catalyses 2 superoxide + 2 H(+) = H2O2 + O2. Its function is as follows. Destroys superoxide anion radicals which are normally produced within the cells and which are toxic to biological systems. This chain is Superoxide dismutase [Mn] (sodA), found in Buchnera aphidicola subsp. Baizongia pistaciae (strain Bp).